We begin with the raw amino-acid sequence, 122 residues long: Large ribosomal subunit protein uL14 (122 aa).

Belongs to the universal ribosomal protein uL14 family. As to quaternary structure, part of the 50S ribosomal subunit. Forms a cluster with proteins L3 and L19. In the 70S ribosome, L14 and L19 interact and together make contacts with the 16S rRNA in bridges B5 and B8.

Binds to 23S rRNA. Forms part of two intersubunit bridges in the 70S ribosome. This is Large ribosomal subunit protein uL14 from Mycobacterium leprae (strain TN).